Consider the following 75-residue polypeptide: uncharacterized protein (75 aa).

The chain crosses the membrane as a helical span at residues 4 to 26; sequence PSLLFLGFSGVLAFGEVGWVGVY.

It localises to the membrane. This is an uncharacterized protein from Treponema pallidum (strain Nichols).